The following is a 454-amino-acid chain: uncharacterized protein (454 aa).

It belongs to the outer membrane factor (OMF) (TC 1.B.17) family.

This is an uncharacterized protein from Haemophilus influenzae (strain ATCC 51907 / DSM 11121 / KW20 / Rd).